Reading from the N-terminus, the 70-residue chain is Large ribosomal subunit protein bL31 (70 aa).

Zn(2+) is bound by residues Cys-16, Cys-18, Cys-37, and Cys-40.

Belongs to the bacterial ribosomal protein bL31 family. Type A subfamily. As to quaternary structure, part of the 50S ribosomal subunit. Zn(2+) is required as a cofactor.

Its function is as follows. Binds the 23S rRNA. This is Large ribosomal subunit protein bL31 from Pasteurella multocida (strain Pm70).